We begin with the raw amino-acid sequence, 784 residues long: SWI/SNF complex subunit SWI3C homolog (784 aa).

Residues 1 to 10 (MPRKASSTSD) show a composition bias toward polar residues. The segment at 1–68 (MPRKASSTSD…PEDADDETLA (68 aa)) is disordered. The segment covering 24-39 (ASPSPSNRSSAAAAAA) has biased composition (low complexity). The segment covering 43–66 (DDSDSAAVNEDDDSAVPEDADDET) has biased composition (acidic residues). Positions 185-284 (HVVPKHSDWF…YLASGSVHRG (100 aa)) constitute an SWIRM domain. Residues 355-409 (LSESSCSYCLQPLTSLHYQSLKEADIALCSDCFHDARYITGHSSLDFQRIDGDND) form a ZZ-type; degenerate zinc finger. Zn(2+) contacts are provided by C360, C363, C383, and C386. One can recognise an SANT domain in the interval 413 to 464 (NDGDSWTDQETLLLLEGIEKYNDNWNNIAEHVGTKSKAQCIYHFIRLPVEDG). Disordered regions lie at residues 667–702 (LASP…SMPQ) and 760–784 (GMPN…SSVG). Residues 675 to 695 (PGGSTSTMSSNPMSMSPRPMG) are compositionally biased toward low complexity.

In terms of assembly, interacts with LFR. Interacts with NMCP1.

It localises to the nucleus. Its subcellular location is the nucleoplasm. Component of a multiprotein complex equivalent of the SWI/SNF complex, an ATP-dependent chromatin-remodeling complex, which is required for the positive and negative regulation of gene expression of a large number of genes. It changes chromatin structure by altering DNA-histone contacts within a nucleosome, leading eventually to a change in nucleosome position, thus facilitating or repressing binding of gene-specific transcription factors. May be involved in positive response to drought stress and modulation of root growth through its interaction with NMCP1. The polypeptide is SWI/SNF complex subunit SWI3C homolog (Oryza sativa subsp. japonica (Rice)).